The sequence spans 227 residues: Octanoyltransferase (227 aa).

In terms of domain architecture, BPL/LPL catalytic spans 47–223; that stretch reads EDTADEIWLL…HLLRLLPPGV (177 aa). Residues 87–94, 154–156, and 167–169 contribute to the substrate site; these read RGGQITYH, ALG, and GLA. Cys185 serves as the catalytic Acyl-thioester intermediate.

Belongs to the LipB family.

It is found in the cytoplasm. It catalyses the reaction octanoyl-[ACP] + L-lysyl-[protein] = N(6)-octanoyl-L-lysyl-[protein] + holo-[ACP] + H(+). The protein operates within protein modification; protein lipoylation via endogenous pathway; protein N(6)-(lipoyl)lysine from octanoyl-[acyl-carrier-protein]: step 1/2. Its function is as follows. Catalyzes the transfer of endogenously produced octanoic acid from octanoyl-acyl-carrier-protein onto the lipoyl domains of lipoate-dependent enzymes. Lipoyl-ACP can also act as a substrate although octanoyl-ACP is likely to be the physiological substrate. In Azoarcus sp. (strain BH72), this protein is Octanoyltransferase.